A 439-amino-acid polypeptide reads, in one-letter code: Dolichyl-diphosphooligosaccharide--protein glycosyltransferase 48 kDa subunit (439 aa).

A signal peptide spans 1–25; the sequence is MELGAAARAWSLLWLLLPLLGLVGA. At 27–410 the chain is on the lumenal side; sequence GPRTLVLLDN…YERFIPSAYP (384 aa). A helical membrane pass occupies residues 411 to 430; the sequence is YYASAFSMMVGLFIFSVVFL. At 431–439 the chain is on the cytoplasmic side; it reads HMKEKEKSD.

The protein belongs to the DDOST 48 kDa subunit family. As to quaternary structure, component of the oligosaccharyltransferase (OST) complex. OST exists in two different complex forms which contain common core subunits RPN1, RPN2, OST48, OST4, DAD1 and TMEM258, either STT3A or STT3B as catalytic subunits, and form-specific accessory subunits. STT3A complex assembly occurs through the formation of 3 subcomplexes. Subcomplex 1 contains RPN1 and TMEM258, subcomplex 2 contains the STT3A-specific subunits STT3A, DC2/OSTC, and KCP2 as well as the core subunit OST4, and subcomplex 3 contains RPN2, DAD1, and OST48. The STT3A complex can form stable complexes with the Sec61 complex or with both the Sec61 and TRAP complexes. Interacts with SMIM22.

It localises to the endoplasmic reticulum membrane. It participates in protein modification; protein glycosylation. Its function is as follows. Subunit of the oligosaccharyl transferase (OST) complex that catalyzes the initial transfer of a defined glycan (Glc(3)Man(9)GlcNAc(2) in eukaryotes) from the lipid carrier dolichol-pyrophosphate to an asparagine residue within an Asn-X-Ser/Thr consensus motif in nascent polypeptide chains, the first step in protein N-glycosylation. N-glycosylation occurs cotranslationally and the complex associates with the Sec61 complex at the channel-forming translocon complex that mediates protein translocation across the endoplasmic reticulum (ER). All subunits are required for a maximal enzyme activity. Required for the assembly of both SST3A- and SS3B-containing OST complexes. This is Dolichyl-diphosphooligosaccharide--protein glycosyltransferase 48 kDa subunit from Sus scrofa (Pig).